The sequence spans 368 residues: Probable ubiquitin receptor RAD23a (368 aa).

Residues 1–77 (MKLTVKTLKG…GFLVVMLSKS (77 aa)) form the Ubiquitin-like domain. Residues 80–111 (ASSAGPSSTQPTSTTTSTISSTTLAAPSTTQS) show a composition bias toward low complexity. The tract at residues 80–136 (ASSAGPSSTQPTSTTTSTISSTTLAAPSTTQSIAVPASNSTPVQEQPTAQSDTYGQA) is disordered. The span at 116–136 (ASNSTPVQEQPTAQSDTYGQA) shows a compositional bias: polar residues. In terms of domain architecture, UBA 1 spans 142–185 (SGSSIEQMVQQIMEMGGGSWDKETVTRALRAAYNNPERAVDYLY). The disordered stretch occupies residues 202–222 (VGSGRELTAPPPSGGPNSSPL). Residues 239 to 282 (GTLEFLRGNDQFQQLRSMVNSNPQILQPMLQELGKQNPQLLRLI) enclose the STI1 domain. In terms of domain architecture, UBA 2 spans 320 to 360 (VTPEEQESIERLEAMGFDRAIVIEAFLSCDRNEELAANYLL).

The protein belongs to the RAD23 family. Interacts with 'Lys-48'-linked polyubiquitin chains. Interacts with RPN10. As to expression, widely expressed in the whole plant.

It localises to the nucleus. It is found in the cytoplasm. May be involved in nucleotide excision repair. Binds and presumably selects ubiquitin-conjugates for destruction. Prefers multiubiquitin chains rather than single ubiquitins, with a binding affinity for 'Lys-48'-linked ubiquitin chains. Acts as a ubiquitin receptor that associates with the 26S proteasomal docking subunit RPN10 for the indirect recognition of ubiquitinated substrates of ubiquitin/26S proteasome-mediated proteolysis (UPP). Involved in UV tolerance in roots, specifically in dark conditions. This is Probable ubiquitin receptor RAD23a from Arabidopsis thaliana (Mouse-ear cress).